Consider the following 462-residue polypeptide: MQLRKMQTVKKEQASLDASSNVDKMMVLNSALTEVSEDSTTGEELLLSEGSVGKNKSSACRRKREFIPDEKKDAMYWEKRRKNNEAAKRSREKRRLNDLVLENKLIALGEENATLKAELLSLKLKFGLISSTAYAQEIQKLSNSTAVYFQDYQTSKSNVSSFVDEHEPSMVSSSCISVIKHSPQSSLSDVSEVSSVEHTQESSVQGSCRSPENKFQIIKQEPMELESYTREPRDDRGSYTASIYQNYMGNSFSGYSHSPPLLQVNRSSSNSPRTSETDDGVVGKSSDGEDEQQVPKGPIHSPVELKHVHATVVKVPEVNSSALPHKLRIKAKAMQIKVEAFDNEFEATQKLSSPIDMTSKRHFELEKHSAPSMVHSSLTPFSVQVTNIQDWSLKSEHWHQKELSGKTQNSFKTGVVEMKDSGYKVSDPENLYLKQGIANLSAEVVSLKRLIATQPISASDSG.

Residue lysine 24 forms a Glycyl lysine isopeptide (Lys-Gly) (interchain with G-Cter in SUMO2) linkage. One can recognise a bZIP domain in the interval 73–136 (DAMYWEKRRK…GLISSTAYAQ (64 aa)). Residues 79 to 95 (KRRKNNEAAKRSREKRR) are basic motif. Positions 99-106 (LVLENKLI) are leucine-zipper. Disordered regions lie at residues 189–237 (DVSE…DDRG) and 258–302 (SPPL…IHSP). Over residues 201–210 (ESSVQGSCRS) the composition is skewed to polar residues. Lysine 214 participates in a covalent cross-link: Glycyl lysine isopeptide (Lys-Gly) (interchain with G-Cter in SUMO2). Residue lysine 219 forms a Glycyl lysine isopeptide (Lys-Gly) (interchain with G-Cter in SUMO1); alternate linkage. A Glycyl lysine isopeptide (Lys-Gly) (interchain with G-Cter in SUMO2); alternate cross-link involves residue lysine 219. The span at 227-237 (SYTREPRDDRG) shows a compositional bias: basic and acidic residues. A compositionally biased stretch (polar residues) spans 264–274 (VNRSSSNSPRT). Positions 299–363 (IHSPVELKHV…PIDMTSKRHF (65 aa)) are necessary for transcriptional repression and sufficient for interaction with DR1. A Phosphoserine modification is found at serine 301. Glycyl lysine isopeptide (Lys-Gly) (interchain with G-Cter in SUMO2) cross-links involve residues lysine 306, lysine 314, lysine 326, lysine 332, lysine 337, and lysine 350. Serine 353 is modified (phosphoserine). Residues lysine 360, lysine 394, lysine 401, lysine 406, lysine 412, lysine 419, lysine 424, lysine 434, and lysine 448 each participate in a glycyl lysine isopeptide (Lys-Gly) (interchain with G-Cter in SUMO2) cross-link.

It belongs to the bZIP family. NFIL3 subfamily. Homodimer. Binds DNA as a dimer. Interacts with DR1. Interacts with PER2 and CRY2. Interacts with NR0B2. Interacts with MYSM1. Expressed in bladder stomach, thyroid, spinal cord, lymph node, trachea, adrenal gland, bone marrow and muscle.

The protein localises to the nucleus. Its function is as follows. Acts as a transcriptional regulator that recognizes and binds to the sequence 5'-[GA]TTA[CT]GTAA[CT]-3', a sequence present in many cellular and viral promoters. Represses transcription from promoters with activating transcription factor (ATF) sites. Represses promoter activity in osteoblasts. Represses transcriptional activity of PER1. Represses transcriptional activity of PER2 via the B-site on the promoter. Activates transcription from the interleukin-3 promoter in T-cells. Competes for the same consensus-binding site with PAR DNA-binding factors (DBP, HLF and TEF). Component of the circadian clock that acts as a negative regulator for the circadian expression of PER2 oscillation in the cell-autonomous core clock. Protects pro-B cells from programmed cell death. Represses the transcription of CYP2A5. Positively regulates the expression and activity of CES2 by antagonizing the repressive action of NR1D1 on CES2. Required for the development of natural killer cell precursors. This is Nuclear factor interleukin-3-regulated protein (NFIL3) from Homo sapiens (Human).